Here is a 113-residue protein sequence, read N- to C-terminus: Ribulose bisphosphate carboxylase small subunit (113 aa).

Belongs to the RuBisCO small chain family. As to quaternary structure, heterohexadecamer of 8 large and 8 small subunits. RuBisCO interacts with the C-terminus of CcmM, and can be found in complexes that also include carbonic anhydrase (ccaA).

It is found in the carboxysome. Functionally, ruBisCO catalyzes two reactions: the carboxylation of D-ribulose 1,5-bisphosphate, the primary event in carbon dioxide fixation, as well as the oxidative fragmentation of the pentose substrate in the photorespiration process. Both reactions occur simultaneously and in competition at the same active site. Although the small subunit is not catalytic it is essential for maximal activity. The chain is Ribulose bisphosphate carboxylase small subunit from Synechocystis sp. (strain ATCC 27184 / PCC 6803 / Kazusa).